Consider the following 281-residue polypeptide: Endonuclease III-like protein 1 (281 aa).

The N-terminal 17 residues, 1-17 (MCAAAPRGGGRAARRLG), are a transit peptide targeting the mitochondrion. The tract at residues 1-60 (MCAAAPRGGGRAARRLGAATAGSRVPSAAPRYSRRTRRVPIAYEAEPKPESPGPKWEPEN) is disordered. The span at 15 to 24 (RLGAATAGSR) shows a compositional bias: low complexity. One can recognise a HhH domain in the interval 168-192 (KYGGDIPGTVEELVKLPGVGPKMAH). Lys189 serves as the catalytic Nucleophile; for N-glycosylase activity. [4Fe-4S] cluster is bound by residues Cys259, Cys266, Cys269, and Cys275.

Belongs to the Nth/MutY family. It depends on [4Fe-4S] cluster as a cofactor.

It localises to the nucleus. The protein resides in the mitochondrion. It carries out the reaction 2'-deoxyribonucleotide-(2'-deoxyribose 5'-phosphate)-2'-deoxyribonucleotide-DNA = a 3'-end 2'-deoxyribonucleotide-(2,3-dehydro-2,3-deoxyribose 5'-phosphate)-DNA + a 5'-end 5'-phospho-2'-deoxyribonucleoside-DNA + H(+). In terms of biological role, bifunctional DNA N-glycosylase with associated apurinic/apyrimidinic (AP) lyase function that catalyzes the first step in base excision repair (BER), the primary repair pathway for the repair of oxidative DNA damage. The DNA N-glycosylase activity releases the damaged DNA base from DNA by cleaving the N-glycosidic bond, leaving an AP site. The AP lyase activity cleaves the phosphodiester bond 3' to the AP site by a beta-elimination. Primarily recognizes and repairs oxidative base damage of pyrimidines. The sequence is that of Endonuclease III-like protein 1 from Gallus gallus (Chicken).